Here is a 77-residue protein sequence, read N- to C-terminus: Conotoxin Ar5.1 a (77 aa).

The signal sequence occupies residues 1-19 (MLCLPVFIILLLLASPAAS). The propeptide occupies 20-44 (NPLETRIQSDLIRAALEDADMKNEK).

This sequence belongs to the conotoxin T superfamily. Post-translationally, contains 2 disulfide bonds that can be either 'C1-C3, C2-C4' or 'C1-C4, C2-C3', since these disulfide connectivities have been observed for conotoxins with cysteine framework V (for examples, see AC P0DQQ7 and AC P81755). Expressed by the venom duct.

It localises to the secreted. This chain is Conotoxin Ar5.1 a, found in Conus arenatus (Sand-dusted cone).